The following is a 63-amino-acid chain: Venom peptide 2b (63 aa).

A signal peptide spans methionine 1 to alanine 22. 5 AXPX repeats span residues alanine 22–leucine 25, alanine 26–glutamate 29, alanine 32–aspartate 35, alanine 38–aspartate 41, and alanine 44–glutamate 47. A propeptide spanning residues glutamate 23–alanine 48 is cleaved from the precursor. At leucine 62 the chain carries Leucine amide.

This sequence belongs to the MCD family. Mastoparan subfamily. Expressed by the venom gland.

Its subcellular location is the secreted. It is found in the target cell membrane. Antimicrobial peptide with strong and moderate activity against the fungi B.cinerea (MIC=5 uM) and C.albicans (MIC=100 uM), the Gram-negative bacterium E.coli (MIC=200 uM) and the Gram-positive bacterium S.aureus (MIC=25 uM). Shows cytolytic activity against insect cell lines. Has potent hemolytic activity against human erythrocytes (EC(50)=64 uM). In vivo, peptide injection in the vicinity of the head and thorax of lepidopteran larvae induces feeding disorder followed by death due to starvation. In Eumenes pomiformis (Potter wasp), this protein is Venom peptide 2b.